The sequence spans 169 residues: MQLRVGLGSKKYHIKLRKESKNKFWLGGVDFENSKYIYDLENSDEVSDVIQLAVADALFGATALGDGHIVFNKGKSTVQFKGTAKKEAPRVLARTYNFIRKNWIINNIDISLEIPQEQKVDDYKHAIFAFICSALRISELTINLKVRKPLDSNEINCLAVVLVERQKTK.

This is an uncharacterized protein from Mycoplasma genitalium (strain ATCC 33530 / DSM 19775 / NCTC 10195 / G37) (Mycoplasmoides genitalium).